Reading from the N-terminus, the 125-residue chain is Fluoride-specific ion channel FluC (125 aa).

4 consecutive transmembrane segments (helical) span residues 1–21 (MIQA…RYYV), 32–52 (AFPW…GVFA), 68–88 (LLIT…LDAI), and 101–121 (IYIA…LAVM). Na(+) is bound by residues Gly75 and Thr78.

Belongs to the fluoride channel Fluc/FEX (TC 1.A.43) family.

It is found in the cell inner membrane. It carries out the reaction fluoride(in) = fluoride(out). Na(+) is not transported, but it plays an essential structural role and its presence is essential for fluoride channel function. Functionally, fluoride-specific ion channel. Important for reducing fluoride concentration in the cell, thus reducing its toxicity. This chain is Fluoride-specific ion channel FluC, found in Rhizobium etli (strain CIAT 652).